The chain runs to 74 residues: Neuropeptide-like protein 33 (74 aa).

The N-terminal stretch at 1 to 21 (MISTSLLLVVLLFAILAIVDA) is a signal peptide. Residue Tyr-72 is modified to Tyrosine amide.

It belongs to the YARP (YGGW-amide related peptide) family. Expressed in hypoderm.

Its subcellular location is the secreted. In terms of biological role, may have antifungic activity against D.coniospora. This Caenorhabditis elegans protein is Neuropeptide-like protein 33 (nlp-33).